Here is a 130-residue protein sequence, read N- to C-terminus: Phosphoribosyl-AMP cyclohydrolase (130 aa).

Mg(2+) is bound at residue Asp77. Cys78 is a binding site for Zn(2+). Mg(2+)-binding residues include Asp79 and Asp81. 2 residues coordinate Zn(2+): Cys95 and Cys102.

Belongs to the PRA-CH family. As to quaternary structure, homodimer. Mg(2+) is required as a cofactor. Zn(2+) serves as cofactor.

The protein resides in the cytoplasm. It carries out the reaction 1-(5-phospho-beta-D-ribosyl)-5'-AMP + H2O = 1-(5-phospho-beta-D-ribosyl)-5-[(5-phospho-beta-D-ribosylamino)methylideneamino]imidazole-4-carboxamide. It participates in amino-acid biosynthesis; L-histidine biosynthesis; L-histidine from 5-phospho-alpha-D-ribose 1-diphosphate: step 3/9. Functionally, catalyzes the hydrolysis of the adenine ring of phosphoribosyl-AMP. This is Phosphoribosyl-AMP cyclohydrolase from Pseudomonas putida (strain W619).